The sequence spans 234 residues: Orotidine 5'-phosphate decarboxylase (234 aa).

Substrate-binding positions include Asp-10, Lys-31, 58 to 67 (DLKLHDIPNT), Thr-121, Arg-183, Gln-192, Gly-212, and Arg-213. Lys-60 serves as the catalytic Proton donor.

This sequence belongs to the OMP decarboxylase family. Type 1 subfamily. As to quaternary structure, homodimer.

It catalyses the reaction orotidine 5'-phosphate + H(+) = UMP + CO2. The protein operates within pyrimidine metabolism; UMP biosynthesis via de novo pathway; UMP from orotate: step 2/2. Catalyzes the decarboxylation of orotidine 5'-monophosphate (OMP) to uridine 5'-monophosphate (UMP). This chain is Orotidine 5'-phosphate decarboxylase, found in Halalkalibacterium halodurans (strain ATCC BAA-125 / DSM 18197 / FERM 7344 / JCM 9153 / C-125) (Bacillus halodurans).